The sequence spans 499 residues: ALBINO3-like protein 1, chloroplastic (499 aa).

Residues 1 to 45 constitute a chloroplast transit peptide; the sequence is MSSTISLKPTHLILSSFSTGKVLQFRRSRFSHTPSSSSSRYRTLV. A run of 4 helical transmembrane segments spans residues 115 to 135, 184 to 204, 263 to 283, and 302 to 322; these read LSTVHVPYSYGFAIILLTVLV, LAGINPLAGCLPTLATIPVWI, LAYLVLPLLLVFSQYLSIQIM, and LLPLMIGYFALSVPSGLSLYW. Positions 378–499 are disordered; that stretch reads LKIPREKGGE…QQHSHETEKR (122 aa). Basic and acidic residues-rich tracts occupy residues 379–420, 430–452, and 486–499; these read KIPR…RQKA, DKAHEQDEKSDTAIVAEDDKKTE, and HDTEQQHSHETEKR. The stretch at 397–436 forms a coiled coil; that stretch reads GERFRLLKEQEAKRRREKEERQKAEAALSNQNTDKAHEQD.

It belongs to the OXA1/ALB3/YidC (TC 2.A.9.2) family. As to quaternary structure, homodimer. Interacts with ALB3. Interacts with STIC2. As to expression, highly expressed in green tissues.

The protein localises to the plastid. Its subcellular location is the chloroplast thylakoid membrane. Functionally, required for the insertion of some light harvesting chlorophyll-binding proteins (LHCP) into the chloroplast thylakoid membrane. Plays a role in the accumulation of some cytochrome b6f components in the thylakoid membrane. Required for the assembly and/or stability of the F(1)F(0) ATP synthase in chloroplast thylakoid membranes. Functions to stabilize or promote assembly of F(1) during its attachment to the membrane-embedded F(0) part. Participates with STIC2 in thylakoid protein targeting. May function with a specific subset of thylakoidal proteins. In Arabidopsis thaliana (Mouse-ear cress), this protein is ALBINO3-like protein 1, chloroplastic.